We begin with the raw amino-acid sequence, 346 residues long: Biotin synthase (346 aa).

One can recognise a Radical SAM core domain in the interval 36-265 (YFGRQVMLHR…KAEIRIGGGR (230 aa)). The [4Fe-4S] cluster site is built by Cys54, Cys58, and Cys61. Residues Cys98, Cys130, Cys190, and Arg260 each coordinate [2Fe-2S] cluster.

This sequence belongs to the radical SAM superfamily. Biotin synthase family. As to quaternary structure, homodimer. Requires [4Fe-4S] cluster as cofactor. [2Fe-2S] cluster serves as cofactor.

It carries out the reaction (4R,5S)-dethiobiotin + (sulfur carrier)-SH + 2 reduced [2Fe-2S]-[ferredoxin] + 2 S-adenosyl-L-methionine = (sulfur carrier)-H + biotin + 2 5'-deoxyadenosine + 2 L-methionine + 2 oxidized [2Fe-2S]-[ferredoxin]. It participates in cofactor biosynthesis; biotin biosynthesis; biotin from 7,8-diaminononanoate: step 2/2. Catalyzes the conversion of dethiobiotin (DTB) to biotin by the insertion of a sulfur atom into dethiobiotin via a radical-based mechanism. This is Biotin synthase from Acaryochloris marina (strain MBIC 11017).